The chain runs to 209 residues: Glycolipid transfer protein (209 aa).

Residue Ala2 is modified to N-acetylalanine. Tandem repeats lie at residues 45–55 (IKADISGNITK) and 56–66 (IKAVYDTNPAK). A 2 X 12 AA approximate tandem repeats region spans residues 45–66 (IKADISGNITKIKAVYDTNPAK). Residue 48 to 55 (DISGNITK) coordinates beta-D-galactosyl-(1-&gt;4)-beta-D-glucosyl-(1&lt;-&gt;1)-N-[(9Z)-octadecenoyl]-sphing-4-enine. 2 residues coordinate beta-D-galactosyl-(1-&gt;4)-beta-D-glucosyl-(1&lt;-&gt;1)-N-[(9Z)-octadecenoyl]-sphing-4-enine: His140 and Tyr207.

It belongs to the GLTP family. As to quaternary structure, monomer. In terms of tissue distribution, detected in fibroblasts (at protein level). Detected in fibroblasts and in various cancer cell lines.

The protein localises to the cytoplasm. Functionally, accelerates the intermembrane transfer of various glycolipids. Catalyzes the transfer of various glycosphingolipids between membranes but does not catalyze the transfer of phospholipids. May be involved in the intracellular translocation of glucosylceramides. This Homo sapiens (Human) protein is Glycolipid transfer protein (GLTP).